Here is a 96-residue protein sequence, read N- to C-terminus: Co-chaperonin GroES (96 aa).

This sequence belongs to the GroES chaperonin family. Heptamer of 7 subunits arranged in a ring. Interacts with the chaperonin GroEL.

Its subcellular location is the cytoplasm. Functionally, together with the chaperonin GroEL, plays an essential role in assisting protein folding. The GroEL-GroES system forms a nano-cage that allows encapsulation of the non-native substrate proteins and provides a physical environment optimized to promote and accelerate protein folding. GroES binds to the apical surface of the GroEL ring, thereby capping the opening of the GroEL channel. This is Co-chaperonin GroES from Shewanella amazonensis (strain ATCC BAA-1098 / SB2B).